A 138-amino-acid polypeptide reads, in one-letter code: MVSEIIKLIEEGKIEEVLKKVEEIKGDAQLEIIALTLIEKGYCDEAVKVAEKISSFGLKDEVLRKVAIAYIENGEIDKAMALVEKIKTETDLEKIAMKLIEIKKYREALKVAEKIKSRAIKEGILMAIINALLDELGK.

This is an uncharacterized protein from Methanocaldococcus jannaschii (strain ATCC 43067 / DSM 2661 / JAL-1 / JCM 10045 / NBRC 100440) (Methanococcus jannaschii).